The chain runs to 442 residues: uncharacterized protein (442 aa).

Residues leucine 211–glycine 269 form a disordered region. Over residues serine 221–aspartate 240 the composition is skewed to acidic residues.

The protein resides in the virion. This is an uncharacterized protein from Acanthamoeba polyphaga (Amoeba).